We begin with the raw amino-acid sequence, 295 residues long: AP-1-like transcription factor YAP4 (295 aa).

Phosphoserine occurs at positions 85, 89, and 196. Residues Ala-181–Pro-202 show a composition bias toward polar residues. The disordered stretch occupies residues Ala-181–Glu-205. One can recognise a bZIP domain in the interval Pro-237–Glu-295. Residues Arg-239 to Lys-260 are basic motif. The leucine-zipper stretch occupies residues Ile-262–Leu-271.

This sequence belongs to the bZIP family. YAP subfamily. As to quaternary structure, homodimer.

It localises to the cytoplasm. The protein localises to the nucleus. Functionally, transcription activator involved in the regulation of genes expressed in response to environmental changes and metabolic requirements. According to genome-wide promoter binding and gene expression studies it regulates, among others, genes involved in ribosome biogenesis, and protein synthesis. It may also be involved in pleiotropic drug resistance. When overexpressed it confers increased resistance to cisplatin, the DNA-alkylating agents methylmethanosulfonate, and mitomycin C, the antimalarial drugs quinidine, mefloquine, and chloroquine, and increases cellular tolerance to sodium and lithium. Preferentially binds 5'-TTACTAA-3'. The sequence is that of AP-1-like transcription factor YAP4 (CIN5) from Saccharomyces cerevisiae (strain ATCC 204508 / S288c) (Baker's yeast).